A 211-amino-acid polypeptide reads, in one-letter code: uncharacterized protein (211 aa).

The protein belongs to the nucleoside deoxyribosyltransferase family.

The protein localises to the cytoplasm. It is found in the nucleus. This is an uncharacterized protein from Schizosaccharomyces pombe (strain 972 / ATCC 24843) (Fission yeast).